The primary structure comprises 1322 residues: C-Jun-amino-terminal kinase-interacting protein 3 (1322 aa).

Residues 12–100 (VVVYQDDYCS…LTQYEREKAL (89 aa)) enclose the RH1 domain. Residues 50 to 80 (EVVKELMPLVVNVLENLDSVLSENQEHEVEL) form a kinesin-binding domain (KBD); essential for its function in axon elongation region. Residues 66-167 (LDSVLSENQE…KKEYNALHQR (102 aa)) adopt a coiled-coil conformation. 2 disordered regions span residues 183-211 (KMQQVGGGGQTESSLPGRSRKERPTSLNV) and 245-317 (SSSY…NSRN). The interval 210–226 (NVFPLADGMVRAQMGGK) is JNK-binding domain (JBD); essential for its function in axon elongation. The span at 261–270 (SSAAATPSTT) shows a compositional bias: low complexity. Phosphothreonine is present on residues threonine 266, threonine 276, and threonine 287. A compositionally biased stretch (polar residues) spans 271-282 (GTKSNTPTSSVP). A compositionally biased stretch (basic residues) spans 305-315 (NNKRAREKRNS). Residues serine 315, serine 365, and serine 366 each carry the phosphoserine modification. The leucine zipper-like domain (LZ); essential for its function in axon elongation stretch occupies residues 424–459 (QLLETKNALNVVKNDLIAKVDQLSGEQEVLKGELEA). Residues 443–534 (VDQLSGEQEV…KERLMELQEA (92 aa)) adopt a coiled-coil conformation. An interaction with NTRK2 region spans residues 459-515 (AAKQAKVKLENRIKELEEELKRVKSEAVTARREPREEVEDDKIPMAQRRRFTRVEMA). One can recognise an RH2 domain in the interval 506 to 580 (RRRFTRVEMA…SPPPAKRSYP (75 aa)). Serine 588 and serine 662 each carry phosphoserine. Disordered stretches follow at residues 704 to 754 (WKPN…EADA), 844 to 952 (PRSN…TTSS), and 1281 to 1307 (RIGDGEDDETEEGTGDVNQTKPSLSKA). Positions 724 to 750 (LTCDREGEGEPKSTHPSPEKKKAKEVP) are enriched in basic and acidic residues. A compositionally biased stretch (polar residues) spans 914 to 937 (APTQSSSTQPASENGSESDGSIVQ). Residues 941–952 (EPSGESSATTSS) show a composition bias toward low complexity. Residues 1285–1294 (GEDDETEEGT) are compositionally biased toward acidic residues.

This sequence belongs to the JIP scaffold family. Forms homo- or heterooligomeric complexes. The central region of MAPK8IP3 interacts with the C-terminal of MAPK8IP2 but not MAPK8IP1. Binds specific components of the JNK signaling pathway namely MAPK8/JNK1, MAPK9/JNK2 and MAPK10/JNK3 to the N-terminal region, MAP2K4/MKK4 and MAP2K7/MKK7 to the central region and MAP3K11 to the C-terminal region. Binds the TPR motif-containing C-terminal of kinesin light chain, KLC1. Pre-assembled MAPK8IP1 scaffolding complexes are then transported as a cargo of kinesin, to the required subcellular location. Interacts with ROCK1 and this interaction is enhanced by ultraviolet-B (UVB) radiation. Interacts with SH3RF2. Interacts with NTRK3/TRKC. Interacts with NTRK2/TRKB. Phosphorylation by ROCK1 is crucial for the recruitment of JNK.

The protein resides in the cytoplasm. The protein localises to the golgi apparatus. It localises to the cytoplasmic vesicle. It is found in the cell projection. Its subcellular location is the growth cone. The protein resides in the axon. The protein localises to the dendrite. It localises to the perinuclear region. The JNK-interacting protein (JIP) group of scaffold proteins selectively mediates JNK signaling by aggregating specific components of the MAPK cascade to form a functional JNK signaling module. May function as a regulator of vesicle transport, through interactions with the JNK-signaling components and motor proteins. Promotes neuronal axon elongation in a kinesin- and JNK-dependent manner. Activates cofilin at axon tips via local activation of JNK, thereby regulating filopodial dynamics and enhancing axon elongation. Its binding to kinesin heavy chains (KHC), promotes kinesin-1 motility along microtubules and is essential for axon elongation and regeneration. Regulates cortical neuronal migration by mediating NTRK2/TRKB anterograde axonal transport during brain development. Acts as an adapter that bridges the interaction between NTRK2/TRKB and KLC1 and drives NTRK2/TRKB axonal but not dendritic anterograde transport, which is essential for subsequent BDNF-triggered signaling and filopodia formation. The polypeptide is C-Jun-amino-terminal kinase-interacting protein 3 (Mapk8ip3) (Rattus norvegicus (Rat)).